The primary structure comprises 248 residues: Small ribosomal subunit protein uS3 (248 aa).

A KH type-2 domain is found at 39–108 (IRKLVDKKLS…TVAVNVAEIP (70 aa)). Positions 214–248 (ETIARPQRRNDERRPEGGDRANRRRPTARRRAGGE) are disordered. The segment covering 221–234 (RRNDERRPEGGDRA) has biased composition (basic and acidic residues). Over residues 235-248 (NRRRPTARRRAGGE) the composition is skewed to basic residues.

The protein belongs to the universal ribosomal protein uS3 family. Part of the 30S ribosomal subunit. Forms a tight complex with proteins S10 and S14.

Functionally, binds the lower part of the 30S subunit head. Binds mRNA in the 70S ribosome, positioning it for translation. This chain is Small ribosomal subunit protein uS3, found in Deinococcus deserti (strain DSM 17065 / CIP 109153 / LMG 22923 / VCD115).